We begin with the raw amino-acid sequence, 250 residues long: N-acyl homoserine lactonase (250 aa).

The Zn(2+) site is built by histidine 104, histidine 106, aspartate 108, histidine 109, histidine 169, aspartate 191, and histidine 235.

It belongs to the metallo-beta-lactamase superfamily. Monomer. The cofactor is Zn(2+).

The catalysed reaction is an N-acyl-L-homoserine lactone + H2O = an N-acyl-L-homoserine + H(+). Its function is as follows. Catalyzes hydrolysis of N-hexanoyl-(S)-homoserine lactone, but not the R-enantiomer. Hydrolyzes short- and long-chain N-acyl homoserine lactones with or without 3-oxo substitution at C3, has maximum activity on C10-AHL. This Bacillus thuringiensis subsp. indiana protein is N-acyl homoserine lactonase.